We begin with the raw amino-acid sequence, 227 residues long: Isopentenyl-diphosphate Delta-isomerase 1 (227 aa).

Position 36 (Lys-36) interacts with substrate. Mg(2+) is bound by residues His-40 and His-51. The Nudix hydrolase domain maps to 49–199; that stretch reads LLHRAFSVFL…EIKITPWFQI (151 aa). 2 residues coordinate substrate: Arg-70 and Lys-74. The active-site Proton acceptor is the Cys-86. Ser-87 provides a ligand contact to substrate. Positions 146 and 148 each coordinate Mg(2+). Residue Glu-148 is part of the active site. Lys-176 bears the N6-acetyllysine mark.

Belongs to the IPP isomerase type 1 family. In terms of assembly, monomer. Mg(2+) serves as cofactor.

Its subcellular location is the peroxisome. It carries out the reaction isopentenyl diphosphate = dimethylallyl diphosphate. The protein operates within isoprenoid biosynthesis; dimethylallyl diphosphate biosynthesis; dimethylallyl diphosphate from isopentenyl diphosphate: step 1/1. In terms of biological role, catalyzes the 1,3-allylic rearrangement of the homoallylic substrate isopentenyl (IPP) to its highly electrophilic allylic isomer, dimethylallyl diphosphate (DMAPP). In Bos taurus (Bovine), this protein is Isopentenyl-diphosphate Delta-isomerase 1 (IDI1).